Here is a 1145-residue protein sequence, read N- to C-terminus: MQIKPIITYSGSCPLFRSLESQILNAIPLDTCEWRRTFQRPTKHVRLEAQAQQFNVAALEKYKQGDWSILEHPILHIFVTECNDVDTYKATIREAIDIWLKTLTSYGVSDWMILLVETLDMRKTKNFMPRTTVLDKIRLDFGTKNDDRCISVLNPAKFEQKSTESFRCLVQRIRFLMLTSYNRNIVKYEELIRSKREKRNIEGWDFRQYFFMQEDLALIFEKLELPTEALIQYDELDAMFSQFITHTGLNEKQQWLNHFRKPLDAFHGICLTRADKFEMRNKIRDEGVSLLEFRNYLFERQAYLLLTCNDIPEIAKRLLNFLFSTLREVELIKLECQEGALCCWEFVCALEVLQLCEQAMEPNELTCFQHCAPIWNLAKDKLYELGKLCGLLPGCTPTSEQLHIVVQLSSGIGDAPSEQHQFLQATPQLRDRSPNRKPKKSGAEQLKEALGSNQAFQKLYLELAELAISTYKHVTRLRSARLVGLDLGNFYCALNEPHKAVGFFTDLLRELKAENWHMLSSQTLLELANCYRKMGDSLAYTKTCSSISCCAELETLVRTFYFDEFLKSLKTLKTTLSAQPSIENANYCVLEDHFRILDIEVVNQKPIIQDDYILVQLKVESLYPRGVVAENVKLCYELEASSLELAMENVSLTASPSTVKAKDTSSRLKVSLQLVYKQDNRLHSAAVACDLPKSKQPVRRTSSTKRKLSPSVQADFTNFVQAENIALQPGVNLIEMKAKATRVGCWQFKQLCISMSSLEFLSEQLPFMPATFEISTKPASATLEFKTLIAGIVQPISLNVSGGSFIFPPDAKITLRCSKNLRIRQARNTDDEAAYNDDQSFESTLQVPLVQFKSFEERRIPLEVLTDMPGRKVSKHHEHHIALNCPWSRTELPIAVDFQPAMEATCRLHTCGTQKFLQVIMKGMEAHLLLQHAQVKCDVPGVQLLDLNPESQQPIEIYKSLTVTYLYEIQVEPLKTEHELPVVKVHFVIKYASLSQPDVWRTYGCAFDLVDYTTLFKLQAQLEPNELCRLRTVCNMNLKITKVHENPYTDLMYEVLNDQNLWAVCGRSAGVVSMKDVDSHSISLDVMPLSTGFLPMPSIRLSKYTAGGKSKTDGHSKVHPFPPGQVYNSTKSMQIHVIASVAGDQ.

This sequence belongs to the TMEM1 family. In terms of assembly, part of the multisubunit TRAPP (transport protein particle) complex. Interacts with Shal (via C-terminal dendritic targeting motif). Co-expressed with Shal in the nervous system.

It is found in the golgi apparatus. The protein resides in the cis-Golgi network. The protein localises to the cell projection. Its subcellular location is the dendrite. It localises to the perikaryon. May play a role in vesicular transport from endoplasmic reticulum to Golgi. Has a role in one of the several mechanisms underlying dendritic localization of Shal channels. The sequence is that of Trafficking protein particle complex subunit 10 (SIDL) from Drosophila melanogaster (Fruit fly).